A 376-amino-acid chain; its full sequence is Lipoyl synthase 1, chloroplastic (376 aa).

A compositionally biased stretch (polar residues) spans 1–13 (MIEQSLSKPSFSL). Disordered regions lie at residues 1–25 (MIEQ…KSKS) and 47–75 (IDAK…DPNV). A chloroplast-targeting transit peptide spans 1-35 (MIEQSLSKPSFSLSIPIPQPPKSKSSFLCSYSKIR). Positions 107, 112, 118, 138, 142, 145, and 353 each coordinate [4Fe-4S] cluster. In terms of domain architecture, Radical SAM core spans 121–342 (GGGDGIATAT…KEYGESIGFR (222 aa)).

The protein belongs to the radical SAM superfamily. Lipoyl synthase family. The cofactor is [4Fe-4S] cluster.

It is found in the plastid. It localises to the chloroplast. It carries out the reaction [[Fe-S] cluster scaffold protein carrying a second [4Fe-4S](2+) cluster] + N(6)-octanoyl-L-lysyl-[protein] + 2 oxidized [2Fe-2S]-[ferredoxin] + 2 S-adenosyl-L-methionine + 4 H(+) = [[Fe-S] cluster scaffold protein] + N(6)-[(R)-dihydrolipoyl]-L-lysyl-[protein] + 4 Fe(3+) + 2 hydrogen sulfide + 2 5'-deoxyadenosine + 2 L-methionine + 2 reduced [2Fe-2S]-[ferredoxin]. The protein operates within protein modification; protein lipoylation via endogenous pathway; protein N(6)-(lipoyl)lysine from octanoyl-[acyl-carrier-protein]: step 2/2. Its function is as follows. Catalyzes the radical-mediated insertion of two sulfur atoms into the C-6 and C-8 positions of the octanoyl moiety bound to the lipoyl domains of lipoate-dependent enzymes, thereby converting the octanoylated domains into lipoylated derivatives. This is Lipoyl synthase 1, chloroplastic from Populus trichocarpa (Western balsam poplar).